The primary structure comprises 595 residues: Elongation factor 4 (595 aa).

One can recognise a tr-type G domain in the interval 2-183 (KNIRNFCIIA…AIVEQVPAPA (182 aa)). GTP contacts are provided by residues 14-19 (DHGKST) and 130-133 (NKVD).

This sequence belongs to the TRAFAC class translation factor GTPase superfamily. Classic translation factor GTPase family. LepA subfamily.

The protein resides in the cell inner membrane. It carries out the reaction GTP + H2O = GDP + phosphate + H(+). Required for accurate and efficient protein synthesis under certain stress conditions. May act as a fidelity factor of the translation reaction, by catalyzing a one-codon backward translocation of tRNAs on improperly translocated ribosomes. Back-translocation proceeds from a post-translocation (POST) complex to a pre-translocation (PRE) complex, thus giving elongation factor G a second chance to translocate the tRNAs correctly. Binds to ribosomes in a GTP-dependent manner. In Porphyromonas gingivalis (strain ATCC 33277 / DSM 20709 / CIP 103683 / JCM 12257 / NCTC 11834 / 2561), this protein is Elongation factor 4.